A 346-amino-acid polypeptide reads, in one-letter code: MLYRSALRTSRAFTPRLALSHSRLVSSLVFLEHKAGKLSEASLSAVTAAKTLGNDTHGLLVGTKSEIENALDRAKEIKGLSKIYLARSDSYSHSLAEALASLLASIVSAKDVSHLFAAHTAVGKNVFPRLAGLLDSSLIADIIALESSGDTFTRPIYAGNAVLTIKSSPKDSVKIVTVRSTAFDKAPVAAGSAVIEDVDIITVDTPTQFVSEELTVSSRPDLASAARVVSGGRALKSKESFDAILNPLADSLGAAVGASRAAVDAGYADNSLQVGQTGKVVAPELYVAIGISGAIQHLAGMKESKMIIAINKDPDAPIFQVADVGLVADLFESVPQLVKELGNVKV.

285–313 is a binding site for FAD; the sequence is LYVAIGISGAIQHLAGMKESKMIIAINKD.

The protein belongs to the ETF alpha-subunit/FixB family. As to quaternary structure, heterodimer of an alpha and a beta subunit. It depends on FAD as a cofactor.

The protein resides in the mitochondrion matrix. Its function is as follows. The electron transfer flavoprotein serves as a specific electron acceptor for several dehydrogenases, including five acyl-CoA dehydrogenases, glutaryl-CoA and sarcosine dehydrogenase. It transfers the electrons to the main mitochondrial respiratory chain via ETF-ubiquinone oxidoreductase (ETF dehydrogenase). The protein is Probable electron transfer flavoprotein subunit alpha, mitochondrial (ETF1) of Cryptococcus gattii serotype B (strain WM276 / ATCC MYA-4071) (Filobasidiella gattii).